The chain runs to 131 residues: MATHKLSFFEKLANTFGALYRHQAQQFPRRLAILKAVGKHELAPPRSADIPAIKADWAKLQKFIETKQYVNLSIKESLVYSAVALEVVFWFFVGEMIGRRYIFGYIVPANYVSKDTKAKVAEKKRLAALEA.

The protein belongs to the ATPase g subunit family. Subunit of the F-type ATPase which has 2 components, CF(1) - the catalytic core - and CF(0) - the membrane proton channel.

The protein localises to the mitochondrion membrane. Functionally, mitochondrial membrane ATP synthase (F(1)F(0) ATP synthase or Complex V) produces ATP from ADP in the presence of a proton gradient across the membrane which is generated by electron transport complexes of the respiratory chain. F-type ATPases consist of two structural domains, F(1) - containing the extramembraneous catalytic core, and F(0) - containing the membrane proton channel, linked together by a central stalk and a peripheral stalk. During catalysis, ATP synthesis in the catalytic domain of F(1) is coupled via a rotary mechanism of the central stalk subunits to proton translocation. Part of the complex F(0) domain. Minor subunit located with subunit a in the membrane. This is Probable ATP synthase subunit g 1, mitochondrial from Caenorhabditis elegans.